The following is a 316-amino-acid chain: ATP synthase gamma chain (316 aa).

It belongs to the ATPase gamma chain family. As to quaternary structure, F-type ATPases have 2 components, CF(1) - the catalytic core - and CF(0) - the membrane proton channel. CF(1) has five subunits: alpha(3), beta(3), gamma(1), delta(1), epsilon(1). CF(0) has three main subunits: a, b and c.

The protein localises to the cellular thylakoid membrane. Produces ATP from ADP in the presence of a proton gradient across the membrane. The gamma chain is believed to be important in regulating ATPase activity and the flow of protons through the CF(0) complex. This is ATP synthase gamma chain from Prochlorococcus marinus (strain AS9601).